The chain runs to 215 residues: Thiamine-phosphate synthase (215 aa).

4-amino-2-methyl-5-(diphosphooxymethyl)pyrimidine contacts are provided by residues 43–47 (QLRDK) and Asn75. Mg(2+) contacts are provided by Asp76 and Asp95. Ser114 provides a ligand contact to 4-amino-2-methyl-5-(diphosphooxymethyl)pyrimidine. 141–143 (TPT) contributes to the 2-[(2R,5Z)-2-carboxy-4-methylthiazol-5(2H)-ylidene]ethyl phosphate binding site. 4-amino-2-methyl-5-(diphosphooxymethyl)pyrimidine is bound at residue Lys144. Gly172 contributes to the 2-[(2R,5Z)-2-carboxy-4-methylthiazol-5(2H)-ylidene]ethyl phosphate binding site.

This sequence belongs to the thiamine-phosphate synthase family. Mg(2+) is required as a cofactor.

It carries out the reaction 2-[(2R,5Z)-2-carboxy-4-methylthiazol-5(2H)-ylidene]ethyl phosphate + 4-amino-2-methyl-5-(diphosphooxymethyl)pyrimidine + 2 H(+) = thiamine phosphate + CO2 + diphosphate. The enzyme catalyses 2-(2-carboxy-4-methylthiazol-5-yl)ethyl phosphate + 4-amino-2-methyl-5-(diphosphooxymethyl)pyrimidine + 2 H(+) = thiamine phosphate + CO2 + diphosphate. The catalysed reaction is 4-methyl-5-(2-phosphooxyethyl)-thiazole + 4-amino-2-methyl-5-(diphosphooxymethyl)pyrimidine + H(+) = thiamine phosphate + diphosphate. The protein operates within cofactor biosynthesis; thiamine diphosphate biosynthesis; thiamine phosphate from 4-amino-2-methyl-5-diphosphomethylpyrimidine and 4-methyl-5-(2-phosphoethyl)-thiazole: step 1/1. In terms of biological role, condenses 4-methyl-5-(beta-hydroxyethyl)thiazole monophosphate (THZ-P) and 2-methyl-4-amino-5-hydroxymethyl pyrimidine pyrophosphate (HMP-PP) to form thiamine monophosphate (TMP). The chain is Thiamine-phosphate synthase from Streptomyces avermitilis (strain ATCC 31267 / DSM 46492 / JCM 5070 / NBRC 14893 / NCIMB 12804 / NRRL 8165 / MA-4680).